A 175-amino-acid chain; its full sequence is ATP-dependent protease subunit HslV (175 aa).

T2 is a catalytic residue. Residues G158, C161, and T164 each coordinate Na(+).

It belongs to the peptidase T1B family. HslV subfamily. A double ring-shaped homohexamer of HslV is capped on each side by a ring-shaped HslU homohexamer. The assembly of the HslU/HslV complex is dependent on binding of ATP.

The protein resides in the cytoplasm. The catalysed reaction is ATP-dependent cleavage of peptide bonds with broad specificity.. With respect to regulation, allosterically activated by HslU binding. Functionally, protease subunit of a proteasome-like degradation complex believed to be a general protein degrading machinery. This Histophilus somni (strain 129Pt) (Haemophilus somnus) protein is ATP-dependent protease subunit HslV.